The primary structure comprises 303 residues: MKKIKCALIGPGNIGTDLLAKLQRSPVLEPVWMVGIDPGSDGLKRARDAGLKTTAEGVDGLLPHVKADGVQIAFDATSAYVHAENSRKLNALGVMMIDLTPAAIGPFCVPPVNLKQHLGRREMNVNMVTCGGQATIPMVAAVSQVQAVAYGEIVATVSSRSVGPGTRKNIDEFTRTTAGAVEKVGGAKKGKAIIIINPAEPPLIMRDTVHCLTVDEPDRDRITASIHQMIREVQKYVPGYKLVNGPVFDGKRVSVFMEVEGLGDYLPKYAGNLDIMTAAAARTAEMFAEELIAGTLKLEAVPA.

Cys130 (acyl-thioester intermediate) is an active-site residue. Residues 161 to 169 (SVGPGTRKN) and Asn272 each bind NAD(+).

The protein belongs to the acetaldehyde dehydrogenase family.

The enzyme catalyses acetaldehyde + NAD(+) + CoA = acetyl-CoA + NADH + H(+). This Methylibium petroleiphilum (strain ATCC BAA-1232 / LMG 22953 / PM1) protein is Acetaldehyde dehydrogenase 1.